A 144-amino-acid chain; its full sequence is Superoxide dismutase [Mn], mitochondrial (144 aa).

Positions 10, 58, and 143 each coordinate Mn(2+).

It belongs to the iron/manganese superoxide dismutase family. In terms of assembly, homotetramer. Mn(2+) is required as a cofactor.

The protein localises to the mitochondrion matrix. The enzyme catalyses 2 superoxide + 2 H(+) = H2O2 + O2. Its function is as follows. Destroys superoxide anion radicals which are normally produced within the cells and which are toxic to biological systems. The protein is Superoxide dismutase [Mn], mitochondrial of Apostichopus californicus (California sea cucumber).